Reading from the N-terminus, the 99-residue chain is Transmembrane protein 14A (99 aa).

3 helical membrane-spanning segments follow: residues 1-21 (MDLIGFGYAALVTIGSVLGYK), 24-44 (GGVPSLIAGLSVGLLAGYGAY), and 79-99 (PAGLVAGLSLMMILRLVLLLL).

Belongs to the TMEM14 family.

The protein resides in the mitochondrion membrane. It localises to the endoplasmic reticulum membrane. Its function is as follows. Inhibits apoptosis via negative regulation of the mitochondrial outer membrane permeabilization involved in apoptotic signaling pathway. In Mus musculus (Mouse), this protein is Transmembrane protein 14A (Tmem14a).